The following is a 358-amino-acid chain: Peptide chain release factor 1 (358 aa).

Residue glutamine 234 is modified to N5-methylglutamine.

Belongs to the prokaryotic/mitochondrial release factor family. In terms of processing, methylated by PrmC. Methylation increases the termination efficiency of RF1.

The protein localises to the cytoplasm. Peptide chain release factor 1 directs the termination of translation in response to the peptide chain termination codons UAG and UAA. In Leifsonia xyli subsp. xyli (strain CTCB07), this protein is Peptide chain release factor 1.